Consider the following 138-residue polypeptide: Translation initiation factor 2 subunit beta (138 aa).

It belongs to the eIF-2-beta/eIF-5 family. As to quaternary structure, heterotrimer composed of an alpha, a beta and a gamma chain.

Its function is as follows. eIF-2 functions in the early steps of protein synthesis by forming a ternary complex with GTP and initiator tRNA. In Methanococcus maripaludis (strain C6 / ATCC BAA-1332), this protein is Translation initiation factor 2 subunit beta.